Here is a 282-residue protein sequence, read N- to C-terminus: Sirohydrochlorin cobaltochelatase CbiKC (282 aa).

H166 serves as the catalytic Proton acceptor. Residues H166 and H228 each contribute to the Co(2+) site.

It belongs to the CbiK family.

It is found in the cytoplasm. The enzyme catalyses Co-sirohydrochlorin + 2 H(+) = sirohydrochlorin + Co(2+). It catalyses the reaction siroheme + 2 H(+) = sirohydrochlorin + Fe(2+). It participates in cofactor biosynthesis; adenosylcobalamin biosynthesis; cob(II)yrinate a,c-diamide from sirohydrochlorin (anaerobic route): step 1/10. The protein operates within porphyrin-containing compound metabolism; siroheme biosynthesis; siroheme from sirohydrochlorin: step 1/1. Its function is as follows. Catalyzes the insertion of Co(2+) into sirohydrochlorin as part of the anaerobic pathway to cobalamin biosynthesis. To a lesser extent, is also able to insert Fe(2+) into sirohydrochlorin, yielding siroheme. The sequence is that of Sirohydrochlorin cobaltochelatase CbiKC (cbiKc) from Nitratidesulfovibrio vulgaris (strain ATCC 29579 / DSM 644 / CCUG 34227 / NCIMB 8303 / VKM B-1760 / Hildenborough) (Desulfovibrio vulgaris).